Consider the following 215-residue polypeptide: Adenylate kinase (215 aa).

10–15 (GAGKGT) lines the ATP pocket. The tract at residues 30-59 (STGDMLRAAVKAETELGLKAKSVMDSGGLV) is NMP. Residues Thr31, Arg36, 57–59 (GLV), 85–88 (GFPR), and Gln92 contribute to the AMP site. The interval 122 to 159 (GRRVHEGSGRIYHTIFNPPKVECIDDVTGEPLLQRKDD) is LID. ATP contacts are provided by residues Arg123 and 132–133 (IY). AMP is bound by residues Arg156 and Arg167. Gly201 is an ATP binding site.

It belongs to the adenylate kinase family. Monomer.

It localises to the cytoplasm. It catalyses the reaction AMP + ATP = 2 ADP. It participates in purine metabolism; AMP biosynthesis via salvage pathway; AMP from ADP: step 1/1. Functionally, catalyzes the reversible transfer of the terminal phosphate group between ATP and AMP. Plays an important role in cellular energy homeostasis and in adenine nucleotide metabolism. The polypeptide is Adenylate kinase (Pseudomonas savastanoi pv. phaseolicola (strain 1448A / Race 6) (Pseudomonas syringae pv. phaseolicola (strain 1448A / Race 6))).